The sequence spans 444 residues: ATP-dependent protease ATPase subunit HslU (444 aa).

ATP-binding positions include isoleucine 18 and 60-65; that span reads GVGKTE. The segment at 141–161 is disordered; sequence DAWGNNEEGDNDSGTRQSFRK. 3 residues coordinate ATP: aspartate 257, glutamate 322, and arginine 394.

It belongs to the ClpX chaperone family. HslU subfamily. A double ring-shaped homohexamer of HslV is capped on each side by a ring-shaped HslU homohexamer. The assembly of the HslU/HslV complex is dependent on binding of ATP.

The protein resides in the cytoplasm. Functionally, ATPase subunit of a proteasome-like degradation complex; this subunit has chaperone activity. The binding of ATP and its subsequent hydrolysis by HslU are essential for unfolding of protein substrates subsequently hydrolyzed by HslV. HslU recognizes the N-terminal part of its protein substrates and unfolds these before they are guided to HslV for hydrolysis. In Aliivibrio fischeri (strain MJ11) (Vibrio fischeri), this protein is ATP-dependent protease ATPase subunit HslU.